The chain runs to 235 residues: Voltage-gated hydrogen channel 1 (235 aa).

Residues 1 to 65 (MSRYLKHFTA…SLRKLYSTER (65 aa)) lie on the Cytoplasmic side of the membrane. A helical membrane pass occupies residues 66-86 (FQIVVVCLVVLDAIFVLCELL). The Extracellular segment spans residues 87–103 (IDLSIIEADHHRIAPQV). The helical transmembrane segment at 104-126 (FHYLSLALLTFFMVELAGKIFAY) threads the bilayer. Over 127–134 (RLEFLHHK) the chain is Cytoplasmic. Residues 135–155 (FEVFDGIVVVVSFILDIIYIS) traverse the membrane as a helical segment. At 156–162 (KEDAFDA) the chain is on the extracellular side. The chain crosses the membrane as a helical span at residues 163-183 (MGLLILLRLWRVARIINGILV). Residues 184 to 235 (SVQNRANHRVEKLKEINESLVHQVNELKEQNTKMDQENVRLRALLKDHSIDF) are Cytoplasmic-facing. The stretch at 187–231 (NRANHRVEKLKEINESLVHQVNELKEQNTKMDQENVRLRALLKDH) forms a coiled coil.

It belongs to the hydrogen channel family. In terms of assembly, homodimer.

The protein resides in the membrane. It is found in the cell membrane. Functionally, mediates the voltage-dependent proton permeability of excitable membranes. Forms a proton-selective channel through which protons may pass in accordance with their electrochemical gradient. The protein is Voltage-gated hydrogen channel 1 (hvcn1) of Danio rerio (Zebrafish).